Here is a 366-residue protein sequence, read N- to C-terminus: Peptide chain release factor 2 (366 aa).

N5-methylglutamine is present on Gln251.

The protein belongs to the prokaryotic/mitochondrial release factor family. In terms of processing, methylated by PrmC. Methylation increases the termination efficiency of RF2.

Its subcellular location is the cytoplasm. Peptide chain release factor 2 directs the termination of translation in response to the peptide chain termination codons UGA and UAA. In Listeria innocua serovar 6a (strain ATCC BAA-680 / CLIP 11262), this protein is Peptide chain release factor 2 (prfB).